A 419-amino-acid polypeptide reads, in one-letter code: Metacaspase-1A (419 aa).

Positions 1-89 (MHHQQSSYGG…PPDQPVSFGQ (89 aa)) are disordered. The span at 41–51 (NGYNSPQQNYG) shows a compositional bias: polar residues. The span at 59–71 (YQQQSAYQNSYNQ) shows a compositional bias: low complexity. Residues His-190 and Cys-246 contribute to the active site.

The protein belongs to the peptidase C14B family.

Involved in cell death (apoptosis). The sequence is that of Metacaspase-1A (casA) from Aspergillus oryzae (strain ATCC 42149 / RIB 40) (Yellow koji mold).